A 228-amino-acid chain; its full sequence is Ephrin-A5 (228 aa).

The first 20 residues, 1 to 20 (MLHVEMLTLVFLVLWMCVFS), serve as a signal peptide directing secretion. An Ephrin RBD domain is found at 29-162 (ADRYAVYWNS…KLKVFVRPTN (134 aa)). An N-linked (GlcNAc...) asparagine glycan is attached at N37. Disulfide bonds link C62–C102 and C90–C151. Residues 186–205 (EPADDTVHESAEPSRGENAA) are disordered. Basic and acidic residues predominate over residues 190–200 (DTVHESAEPSR). A lipid anchor (GPI-anchor amidated asparagine) is attached at N203. Positions 204–228 (AAQTPRIPSRLLAILLFLLAMLLTL) are cleaved as a propeptide — removed in mature form.

The protein belongs to the ephrin family. In terms of assembly, binds to EPHB2. Interacts with EPHA8; activates EPHA8. Binds to the receptor tyrosine kinases EPHA2, EPHA3 and EPHB1. Forms a ternary EFNA5-EPHA3-ADAM10 complex mediating EFNA5 extracellular domain shedding by ADAM10 which regulates the EFNA5-EPHA3 complex internalization and function.

The protein resides in the cell membrane. Its subcellular location is the membrane. The protein localises to the caveola. Its function is as follows. Cell surface GPI-bound ligand for Eph receptors, a family of receptor tyrosine kinases which are crucial for migration, repulsion and adhesion during neuronal, vascular and epithelial development. Binds promiscuously Eph receptors residing on adjacent cells, leading to contact-dependent bidirectional signaling into neighboring cells. The signaling pathway downstream of the receptor is referred to as forward signaling while the signaling pathway downstream of the ephrin ligand is referred to as reverse signaling. Induces compartmentalized signaling within a caveolae-like membrane microdomain when bound to the extracellular domain of its cognate receptor. This signaling event requires the activity of the Fyn tyrosine kinase. Activates the EPHA3 receptor to regulate cell-cell adhesion and cytoskeletal organization. With the receptor EPHA2 may regulate lens fiber cells shape and interactions and be important for lens transparency maintenance. May function actively to stimulate axon fasciculation. The interaction of EFNA5 with EPHA5 also mediates communication between pancreatic islet cells to regulate glucose-stimulated insulin secretion. Cognate/functional ligand for EPHA7, their interaction regulates brain development modulating cell-cell adhesion and repulsion. This chain is Ephrin-A5 (EFNA5), found in Homo sapiens (Human).